Consider the following 489-residue polypeptide: Endoglucanase 4 (489 aa).

Positions 1–25 are cleaved as a signal peptide; the sequence is MAGKSFMTPAIMLAMLLLISPETYA. Aspartate 81 functions as the Nucleophile in the catalytic mechanism. Histidine 409 is an active-site residue. N-linked (GlcNAc...) asparagine glycosylation occurs at asparagine 453. Residues aspartate 460 and glutamate 469 contribute to the active site.

The protein belongs to the glycosyl hydrolase 9 (cellulase E) family.

The protein localises to the secreted. It carries out the reaction Endohydrolysis of (1-&gt;4)-beta-D-glucosidic linkages in cellulose, lichenin and cereal beta-D-glucans.. This chain is Endoglucanase 4, found in Arabidopsis thaliana (Mouse-ear cress).